A 208-amino-acid chain; its full sequence is UPF0637 protein lp_2332 (208 aa).

Belongs to the UPF0637 family.

The sequence is that of UPF0637 protein lp_2332 from Lactiplantibacillus plantarum (strain ATCC BAA-793 / NCIMB 8826 / WCFS1) (Lactobacillus plantarum).